Reading from the N-terminus, the 414-residue chain is MTQANLSETLFKPRFKHPETSTLVRRFSHGAQPPVQSALDGKTIPHWYRMINRLMWIWRGIDPREILDVQARIVMSDAERTDDDLYDTVIGYRGGNWIYEWATQAMVWQQKACAEEDPQLSGRHWLHAATLYNIAAYPHLKGDDLAEQAQALSNRAYEEAAQRLPGTMRQMEFTVPGGAPITGFLHMPKGDGPFPTVLMCGGLDAMQTDYYSLYERYFAPRGIAMLTIDMPSVGFSSKWKLTQDSSLLHQHVLKALPNVPWVDHTRVAAFGFRFGANVAVRLAYLESPRLKVVACLGPVVHTLLSDFKCQQQVPEMYLDVLASRLGMHDASDEALRVELNRYSLKVQGLLGRRCPTPMLSGYWKNDPFSPEEDSRLITSSSADGKLLEIPFNPVYRNFDKGLQEITDWIEKRLC.

This sequence belongs to the FrsA family.

The catalysed reaction is a carboxylic ester + H2O = an alcohol + a carboxylate + H(+). Its function is as follows. Catalyzes the hydrolysis of esters. This Escherichia coli O6:K15:H31 (strain 536 / UPEC) protein is Esterase FrsA.